We begin with the raw amino-acid sequence, 449 residues long: Glycosyl hydrolase-like protein 1 (449 aa).

A beta-D-glucoside contacts are provided by residues Gln22, His119, 164–165 (NE), Tyr292, Glu350, Trp393, and Tyr406. The Proton donor role is filled by Glu165. Glu350 serves as the catalytic Nucleophile.

This sequence belongs to the glycosyl hydrolase 1 family. In terms of tissue distribution, mainly expressed in flowers, flower buds and young leaves, and, to a lesser extent, in old leaves, stems and roots.

Its subcellular location is the cytoplasm. The protein operates within secondary metabolite biosynthesis; terpenoid biosynthesis. Functionally, component of the oleanane-type triterpene saponins (e.g. saponarioside A and saponarioside B) biosynthetic pathway, leading to the production of natural products with detergent properties used as traditional sources of soap. Beta-glycosidase that catalyzes the transfer of glucose moiety to QA-triFRXX to produce QA-triF(Q)RXX via the elongation of the C-28 sugar chain with a D-quinovose. This Saponaria officinalis (Common soapwort) protein is Glycosyl hydrolase-like protein 1.